Here is a 269-residue protein sequence, read N- to C-terminus: Orotidine 5'-phosphate decarboxylase (269 aa).

The active-site Proton donor is the K92.

It belongs to the OMP decarboxylase family. Type 2 subfamily.

It carries out the reaction orotidine 5'-phosphate + H(+) = UMP + CO2. It functions in the pathway pyrimidine metabolism; UMP biosynthesis via de novo pathway; UMP from orotate: step 2/2. The sequence is that of Orotidine 5'-phosphate decarboxylase from Natronomonas pharaonis (strain ATCC 35678 / DSM 2160 / CIP 103997 / JCM 8858 / NBRC 14720 / NCIMB 2260 / Gabara) (Halobacterium pharaonis).